The primary structure comprises 240 residues: tRNA pseudouridine synthase A (240 aa).

D50 serves as the catalytic Nucleophile. Y109 provides a ligand contact to substrate.

Belongs to the tRNA pseudouridine synthase TruA family. In terms of assembly, homodimer.

The enzyme catalyses uridine(38/39/40) in tRNA = pseudouridine(38/39/40) in tRNA. Functionally, formation of pseudouridine at positions 38, 39 and 40 in the anticodon stem and loop of transfer RNAs. This is tRNA pseudouridine synthase A from Campylobacter jejuni (strain RM1221).